The primary structure comprises 72 residues: SRY-related protein ADW2 (72 aa).

The segment at residues 1–69 is a DNA-binding region (HMG box); sequence VKRPMNAFMV…KHMADYADYK (69 aa).

Its subcellular location is the nucleus. In Alligator mississippiensis (American alligator), this protein is SRY-related protein ADW2.